Here is a 459-residue protein sequence, read N- to C-terminus: Prenyltransferase penI (459 aa).

L-tryptophan is bound by residues 107 to 108 (VV) and glutamate 111. 5 residues coordinate substrate: arginine 126, arginine 276, lysine 278, tyrosine 280, and tyrosine 384.

Belongs to the tryptophan dimethylallyltransferase family.

The catalysed reaction is quinolinone B + dimethylallyl diphosphate = peniprequinolone + diphosphate. The protein operates within secondary metabolite biosynthesis. It participates in alkaloid biosynthesis. Its pathway is mycotoxin biosynthesis. Functionally, prenyltransferase; part of the gene cluster that mediates the biosynthesis of penigequinolones, potent insecticidal alkaloids that contain a highly modified 10-carbon prenyl group. The first stage is catalyzed by the nonribosomal peptide synthetase penN that condenses anthranilic acid and O-methyl-L-tyrosine to produce 4'-methoxycyclopeptin. 4'-methoxycyclopeptin is then converted to 4'-methoxydehydrocyclopeptin by the ketoglutarate-dependent dioxygenase penM through dehydrogenation to form a double bond between C-alpha and C-beta of the O-methyltyrosine side chain. PenM also converts its first product methoxydehydrocyclopeptin to 4'-methoxycyclopenin. The following conversion of 4'methoxycyclopenin into 4'-methoxyviridicatin is catalyzed by the cyclopenase penL. 4'-methoxyviridicatin is the precursor of quinolone natural products, and is further converted to quinolinone B. The prenyltransferase penI then catalyzes the canonical Friedel-Crafts alkylation of quinolinone B with dimethylallyl cation to yield dimethylallyl quinolone, which is subjected to FAD-dependent dehydrogenation by the FAD-linked oxidoreductase penH to yield conjugated aryl diene. The delta(3') double bond then serves as the site of the second alkylation with DMAPP catalyzed by the prenyltransferase penG to yield a carbenium ion intermediate, which can be attacked by H(2)O to yield a styrenyl quinolone containing a C3'-hydroxyprenyl chain, or undergo cyclization to yield yaequinolones J1 and J2. The conversion of the styrenyl quinolone into the tetrahydrofuran-containing yaequinolone C is performed by the FAD-dependent monooxygenase penE and involves epoxidation of the terminal C7'-C8' olefin, followed by epoxide ring opening initiated by the C3' hydroxyl group. The predicted cysteine hydrolase penJ acts as an epoxide hydrolase that enhances the rate of the 5-exo-tet cyclization step, increasing the yield of yaequinolone C. PenF catalyzes the cationic rearrangement of the epoxide formed by penE (before ring opening to produce yaequinolone C) into yaequinolone D. Finally, the short-chain dehydrogenase/reductase (SDR)-like reductase penD, catalyzes both the dehydration of yaequinolone D and the reduction of the resulting oxonium to yield penigequinolone. The chain is Prenyltransferase penI from Penicillium thymicola.